The following is a 508-amino-acid chain: Light-independent protochlorophyllide reductase subunit B (508 aa).

Asp36 provides a ligand contact to [4Fe-4S] cluster. Asp294 (proton donor) is an active-site residue. Substrate is bound at residue 429-430 (GM).

Belongs to the ChlB/BchB/BchZ family. As to quaternary structure, protochlorophyllide reductase is composed of three subunits; ChlL, ChlN and ChlB. Forms a heterotetramer of two ChlB and two ChlN subunits. Requires [4Fe-4S] cluster as cofactor.

The enzyme catalyses chlorophyllide a + oxidized 2[4Fe-4S]-[ferredoxin] + 2 ADP + 2 phosphate = protochlorophyllide a + reduced 2[4Fe-4S]-[ferredoxin] + 2 ATP + 2 H2O. It functions in the pathway porphyrin-containing compound metabolism; chlorophyll biosynthesis (light-independent). Functionally, component of the dark-operative protochlorophyllide reductase (DPOR) that uses Mg-ATP and reduced ferredoxin to reduce ring D of protochlorophyllide (Pchlide) to form chlorophyllide a (Chlide). This reaction is light-independent. The NB-protein (ChlN-ChlB) is the catalytic component of the complex. The sequence is that of Light-independent protochlorophyllide reductase subunit B from Picosynechococcus sp. (strain ATCC 27264 / PCC 7002 / PR-6) (Agmenellum quadruplicatum).